Here is a 232-residue protein sequence, read N- to C-terminus: Ion-translocating oxidoreductase complex subunit E (232 aa).

A run of 6 helical transmembrane segments spans residues 18–38, 39–59, 69–89, 93–113, 127–147, and 182–202; these read GLVQ…ITNA, LGLG…VSLV, IPVF…LINA, GLYL…IIIG, AAFD…VLGA, and PFLL…LIAL.

This sequence belongs to the NqrDE/RnfAE family. As to quaternary structure, the complex is composed of six subunits: RnfA, RnfB, RnfC, RnfD, RnfE and RnfG.

The protein localises to the cell inner membrane. In terms of biological role, part of a membrane-bound complex that couples electron transfer with translocation of ions across the membrane. The chain is Ion-translocating oxidoreductase complex subunit E from Shewanella baltica (strain OS185).